Consider the following 485-residue polypeptide: ATP-dependent protease ATPase subunit HslU (485 aa).

Residues Ile22 and 64–69 each bind ATP; that span reads GVGKTE. The tract at residues 146-189 is disordered; sequence KKTAATSAQPQDVSQASSGTTISLPSVSSTAQAEEHKAQNENDM. Residues 149–177 show a composition bias toward polar residues; sequence AATSAQPQDVSQASSGTTISLPSVSSTAQ. The span at 178–189 shows a compositional bias: basic and acidic residues; sequence AEEHKAQNENDM. ATP is bound by residues Asp297, Glu363, and Arg435.

Belongs to the ClpX chaperone family. HslU subfamily. In terms of assembly, a double ring-shaped homohexamer of HslV is capped on each side by a ring-shaped HslU homohexamer. The assembly of the HslU/HslV complex is dependent on binding of ATP.

Its subcellular location is the cytoplasm. Functionally, ATPase subunit of a proteasome-like degradation complex; this subunit has chaperone activity. The binding of ATP and its subsequent hydrolysis by HslU are essential for unfolding of protein substrates subsequently hydrolyzed by HslV. HslU recognizes the N-terminal part of its protein substrates and unfolds these before they are guided to HslV for hydrolysis. The sequence is that of ATP-dependent protease ATPase subunit HslU from Treponema denticola (strain ATCC 35405 / DSM 14222 / CIP 103919 / JCM 8153 / KCTC 15104).